The following is a 616-amino-acid chain: Dihydroxy-acid dehydratase (616 aa).

Asp-81 lines the Mg(2+) pocket. Cys-122 serves as a coordination point for [2Fe-2S] cluster. Residues Asp-123 and Lys-124 each contribute to the Mg(2+) site. N6-carboxylysine is present on Lys-124. [2Fe-2S] cluster is bound at residue Cys-195. Glu-491 provides a ligand contact to Mg(2+). Ser-517 acts as the Proton acceptor in catalysis.

The protein belongs to the IlvD/Edd family. In terms of assembly, homodimer. [2Fe-2S] cluster serves as cofactor. Mg(2+) is required as a cofactor.

The catalysed reaction is (2R)-2,3-dihydroxy-3-methylbutanoate = 3-methyl-2-oxobutanoate + H2O. It carries out the reaction (2R,3R)-2,3-dihydroxy-3-methylpentanoate = (S)-3-methyl-2-oxopentanoate + H2O. It participates in amino-acid biosynthesis; L-isoleucine biosynthesis; L-isoleucine from 2-oxobutanoate: step 3/4. It functions in the pathway amino-acid biosynthesis; L-valine biosynthesis; L-valine from pyruvate: step 3/4. In terms of biological role, functions in the biosynthesis of branched-chain amino acids. Catalyzes the dehydration of (2R,3R)-2,3-dihydroxy-3-methylpentanoate (2,3-dihydroxy-3-methylvalerate) into 2-oxo-3-methylpentanoate (2-oxo-3-methylvalerate) and of (2R)-2,3-dihydroxy-3-methylbutanoate (2,3-dihydroxyisovalerate) into 2-oxo-3-methylbutanoate (2-oxoisovalerate), the penultimate precursor to L-isoleucine and L-valine, respectively. The chain is Dihydroxy-acid dehydratase from Erwinia tasmaniensis (strain DSM 17950 / CFBP 7177 / CIP 109463 / NCPPB 4357 / Et1/99).